The chain runs to 262 residues: Indole-3-glycerol phosphate synthase (262 aa).

Belongs to the TrpC family.

The catalysed reaction is 1-(2-carboxyphenylamino)-1-deoxy-D-ribulose 5-phosphate + H(+) = (1S,2R)-1-C-(indol-3-yl)glycerol 3-phosphate + CO2 + H2O. Its pathway is amino-acid biosynthesis; L-tryptophan biosynthesis; L-tryptophan from chorismate: step 4/5. The polypeptide is Indole-3-glycerol phosphate synthase (Leptothrix cholodnii (strain ATCC 51168 / LMG 8142 / SP-6) (Leptothrix discophora (strain SP-6))).